The chain runs to 73 residues: Large ribosomal subunit protein bL27c (73 aa).

The protein belongs to the bacterial ribosomal protein bL27 family.

It localises to the plastid. Its subcellular location is the chloroplast. This Haptolina hirta (Plankton alga) protein is Large ribosomal subunit protein bL27c (rpl27).